The following is a 73-amino-acid chain: Putative defensin-like protein 270 (73 aa).

A signal peptide spans 1 to 23 (MMSSKSHFVALLLIIFLIVNVQS). Cystine bridges form between C33–C72, C39–C60, C45–C70, and C49–C71.

It belongs to the DEFL family.

It localises to the secreted. The sequence is that of Putative defensin-like protein 270 from Arabidopsis thaliana (Mouse-ear cress).